Consider the following 289-residue polypeptide: 4-hydroxy-tetrahydrodipicolinate synthase (289 aa).

Threonine 44 is a pyruvate binding site. The Proton donor/acceptor role is filled by tyrosine 130. The Schiff-base intermediate with substrate role is filled by lysine 158. Isoleucine 200 is a binding site for pyruvate.

This sequence belongs to the DapA family. Homotetramer; dimer of dimers.

The protein resides in the cytoplasm. The catalysed reaction is L-aspartate 4-semialdehyde + pyruvate = (2S,4S)-4-hydroxy-2,3,4,5-tetrahydrodipicolinate + H2O + H(+). It functions in the pathway amino-acid biosynthesis; L-lysine biosynthesis via DAP pathway; (S)-tetrahydrodipicolinate from L-aspartate: step 3/4. Catalyzes the condensation of (S)-aspartate-beta-semialdehyde [(S)-ASA] and pyruvate to 4-hydroxy-tetrahydrodipicolinate (HTPA). The chain is 4-hydroxy-tetrahydrodipicolinate synthase from Archaeoglobus fulgidus (strain ATCC 49558 / DSM 4304 / JCM 9628 / NBRC 100126 / VC-16).